Consider the following 515-residue polypeptide: Nectin-1 (515 aa).

The N-terminal stretch at 1–30 (MARMGLAGAAGRWWGLALGLTAFFLPGAHT) is a signal peptide. An Ig-like V-type domain is found at 31–141 (QVVQVNDSMY…GNRESQLNLT (111 aa)). The Extracellular portion of the chain corresponds to 31–355 (QVVQVNDSMY…GRRAGQVPTA (325 aa)). N-linked (GlcNAc...) asparagine glycans are attached at residues N36, N72, N139, N202, N286, N297, N307, and N332. A disulfide bond links C51 and C124. Ig-like C2-type domains are found at residues 145-243 (KPTN…TLNV) and 247-334 (PEVT…VNIT). Cystine bridges form between C172/C226 and C269/C316. The segment at 282-299 (WTTLNGSLPKGVEAQNRT) is interaction with FGFR. Residues 356–376 (IIGGVVGSILLVLFVVGGIVV) form a helical membrane-spanning segment. Topologically, residues 377-515 (ALCRRRHTFK…SFISKKEWYV (139 aa)) are cytoplasmic. Positions 400 to 486 (YSKAGIPQHH…DGYGDRTLGY (87 aa)) are disordered. S422, S434, and S435 each carry phosphoserine. The residue at position 436 (Y436) is a Phosphotyrosine. The span at 436–445 (YEEEEEEEGG) shows a compositional bias: acidic residues. Residues 446-464 (GGERKVGGPHPKYDEDAKR) are compositionally biased toward basic and acidic residues. S509 carries the phosphoserine modification.

This sequence belongs to the nectin family. (Microbial infection) Interacts with herpes pseudorabies virus/PRV envelope glycoprotein D.

It is found in the cell membrane. The protein resides in the cell junction. Its subcellular location is the adherens junction. It localises to the presynaptic cell membrane. Functionally, (Microbial infection) Acts as a receptor for herpes simplex virus 1/HHV-1, herpes simplex virus 2/HHV-2, and pseudorabies virus/PRV. The protein is Nectin-1 of Sus scrofa (Pig).